Consider the following 200-residue polypeptide: 7-methyl-GTP pyrophosphatase (200 aa).

Residue Asp-69 is the Proton acceptor of the active site.

It belongs to the Maf family. YceF subfamily. A divalent metal cation serves as cofactor.

The protein localises to the cytoplasm. The catalysed reaction is N(7)-methyl-GTP + H2O = N(7)-methyl-GMP + diphosphate + H(+). Its function is as follows. Nucleoside triphosphate pyrophosphatase that hydrolyzes 7-methyl-GTP (m(7)GTP). May have a dual role in cell division arrest and in preventing the incorporation of modified nucleotides into cellular nucleic acids. The sequence is that of 7-methyl-GTP pyrophosphatase from Colwellia psychrerythraea (strain 34H / ATCC BAA-681) (Vibrio psychroerythus).